The chain runs to 1309 residues: Mediator of RNA polymerase II transcription subunit 33A (1309 aa).

The segment at 809–829 (QTLNPVNSGTSSSSGAASEDS) is disordered. The span at 816-826 (SGTSSSSGAAS) shows a compositional bias: low complexity.

It belongs to the Mediator complex subunit 33 family. Component of the Mediator complex.

The protein localises to the nucleus. Functionally, component of the Mediator complex, a coactivator involved in the regulated transcription of nearly all RNA polymerase II-dependent genes. Mediator functions as a bridge to convey information from gene-specific regulatory proteins to the basal RNA polymerase II transcription machinery. The Mediator complex, having a compact conformation in its free form, is recruited to promoters by direct interactions with regulatory proteins and serves for the assembly of a functional preinitiation complex with RNA polymerase II and the general transcription factors. Involved in the repression of phenylpropanoid biosynthesis. May compete with MED33B for common binding partners or for occupancy in Mediator. This Arabidopsis thaliana (Mouse-ear cress) protein is Mediator of RNA polymerase II transcription subunit 33A (MED33A).